The chain runs to 402 residues: Potassium channel subfamily K member 9 (402 aa).

Over 1–8 (MKRQNVRT) the chain is Cytoplasmic. The helical transmembrane segment at 9 to 29 (LSLIACTFTYLLVGAAVFDAL) threads the bilayer. The Extracellular portion of the chain corresponds to 30-88 (ESDHEMREEEKLKAEEVRLRGKYNISSDDYQQLELVILQSEPHRAGVQWKFAGSFYFAI). Asn53 is a glycosylation site (N-linked (GlcNAc...) asparagine). The pore-forming intramembrane region spans 89 to 101 (TVITTIGYGHAAP). K(+)-binding residues include Thr93, Ile94, Gly95, and Tyr96. The segment at 93–98 (TIGYGH) is selectivity filter 1. The Extracellular segment spans residues 102–107 (GTDAGK). A helical membrane pass occupies residues 108-128 (AFCMFYAVLGIPLTLVMFQSL). At 129 to 158 (GERMNTFVRYLLKRIKKCCGMRNTEVSMEN) the chain is on the cytoplasmic side. A helical transmembrane segment spans residues 159 to 179 (MVTVGFFSCMGTLCLGAAAFS). Over 180–194 (QCEDWSFFHAYYYCF) the chain is Extracellular. An intramembrane region (pore-forming) is located at residues 195 to 207 (ITLTTIGFGDFVA). Residues Thr199, Ile200, Gly201, and Phe202 each coordinate K(+). The interval 199–204 (TIGFGD) is selectivity filter 2. The Extracellular segment spans residues 208–218 (LQAKGALQRKP). The chain crosses the membrane as a helical span at residues 219-239 (FYVAFSFMYILVGLTVIGAFL). The Cytoplasmic segment spans residues 240–402 (NLVVLRFLTM…HRLHLRRKSI (163 aa)). Residues 243-248 (VLRFLT) are X-gate.

The protein belongs to the two pore domain potassium channel (TC 1.A.1.8) family. Homodimer. Heterodimer with KCNK1. Heterodimer with KCNK3. As to expression, expressed in adrenal glands mainly in outer zona glomerulosa and inner zona medullaris. Expressed in retinal ganglion cells. Expressed in dentate gyrus (at protein level).

Its subcellular location is the cell membrane. It is found in the mitochondrion inner membrane. It localises to the cell projection. The protein resides in the dendrite. The catalysed reaction is K(+)(in) = K(+)(out). It carries out the reaction Na(+)(in) = Na(+)(out). With respect to regulation, inhibited by NTS:NTSR1 signaling in dentate gyrus granule cells. In terms of biological role, k(+) channel that conducts voltage-dependent outward rectifying currents upon membrane depolarization. Voltage sensing is coupled to K(+) electrochemical gradient in an 'ion flux gating' mode where outward but not inward ion flow opens the gate. Changes ion selectivity and becomes permeable to Na(+) ions in response to extracellular acidification. Protonation of the pH sensor His-98 stabilizes C-type inactivation conformation likely converting the channel from outward K(+)-conducting, to inward Na(+)-conducting to nonconductive state. Homo- and heterodimerizes to form functional channels with distinct regulatory and gating properties. Allows K(+) currents with fast-gating kinetics important for the repolarization and hyperpolarization phases of action potentials. In granule neurons, hyperpolarizes the resting membrane potential to limit intrinsic neuronal excitability, but once the action potential threshold is reached, supports high-frequency action potential firing and increased neuronal excitability. Homomeric and/or heteromeric KCNK3:KCNK9 channels operate in cerebellar granule cells, whereas heteromeric KCNK1:KCNK9 enables currents in hippocampal dentate gyrus granule neurons. Dispensable for central chemosensory respiration i.e. breathing controlled by brainstem CO2/pH, it rather conducts pH-sensitive currents and controls the firing rate of serotonergic raphe neurons involved in potentiation of the respiratory chemoreflex. In retinal ganglion cells, mediates outward rectifying currents that regulate action potentials in response to acidification of the synaptic cleft. Involved in transmission of image-forming and nonimage-forming visual information in the retina. In adrenal gland, contributes to the maintenance of a hyperpolarized resting membrane potential of aldosterone-producing cells at zona glomerulosa and limits aldosterone release as part of a regulatory mechanism that controls arterial blood pressure and electrolyte homeostasis. The protein is Potassium channel subfamily K member 9 of Mus musculus (Mouse).